The following is a 102-amino-acid chain: uncharacterized protein (102 aa).

The helical transmembrane segment at 77-96 (FFSACVAKSYSSFFISICIL) threads the bilayer.

It is found in the membrane. This is an uncharacterized protein from Saccharomyces cerevisiae (strain ATCC 204508 / S288c) (Baker's yeast).